The following is a 622-amino-acid chain: Probable potassium transport system protein Kup 1 (622 aa).

The next 12 helical transmembrane spans lie at 11-31, 50-70, 101-121, 137-157, 168-188, 215-235, 247-267, 285-305, 337-357, 366-386, 393-413, and 419-439; these read LTLGAIGVVYGDIGTSVLYAV, ILSIFFWTLTIIVSLKYVTLV, VLLLVGIFGTCLFYGDGVITP, PAFNKFVIPLTLLVLFGLFWV, FFGPITVVWFACIAVLGVAQI, FIILGAVVLCVTGAEALYADL, WFAVVMPALTLNYFGQGALLL, ALLPLVGLATLATVIASQALI, IYLPFVNWGLFVTIVLAVMIF, AYGIAVCTDMLITTILTFFVI, PLWLCVAATSFFFVVDFAFWA, and LFDGGWFPLLIGGAIFILMIT.

The protein belongs to the HAK/KUP transporter (TC 2.A.72) family.

It localises to the cell inner membrane. The catalysed reaction is K(+)(in) + H(+)(in) = K(+)(out) + H(+)(out). Its function is as follows. Transport of potassium into the cell. Likely operates as a K(+):H(+) symporter. This Albidiferax ferrireducens (strain ATCC BAA-621 / DSM 15236 / T118) (Rhodoferax ferrireducens) protein is Probable potassium transport system protein Kup 1.